Consider the following 371-residue polypeptide: MASVTLGSWIVVHHHNHHHPSSILTKSRSRSCPITLTKPISFRSKRTVSSSSSIVSSSVVTKEDNLRQSEPSSFDFMSYIITKAELVNKALDSAVPLREPLKIHEAMRYSLLAGGKRVRPVLCIAACELVGGEESTAMPAACAVEMIHTMSLIHDDLPCMDNDDLRRGKPTNHKVFGEDVAVLAGDALLSFAFEHLASATSSDVVSPVRVVRAVGELAKAIGTEGLVAGQVVDISSEGLDLNDVGLEHLEFIHLHKTAALLEASAVLGAIVGGGSDDEIERLRKFARCIGLLFQVVDDILDVTKSSKELGKTAGKDLIADKLTYPKIMGLEKSREFAEKLNREARDQLLGFDSDKVAPLLALANYIAYRQN.

Residues 1-51 (MASVTLGSWIVVHHHNHHHPSSILTKSRSRSCPITLTKPISFRSKRTVSSS) constitute a chloroplast transit peptide. Serine 52 is modified (N-acetylserine). Isopentenyl diphosphate is bound by residues lysine 116, arginine 119, and histidine 148. The Mg(2+) site is built by aspartate 155 and aspartate 161. Arginine 166 is a binding site for dimethylallyl diphosphate. Arginine 167 serves as a coordination point for isopentenyl diphosphate. Dimethylallyl diphosphate is bound by residues lysine 256, threonine 257, glutamine 294, lysine 311, and lysine 321.

This sequence belongs to the FPP/GGPP synthase family. Forms homodimers. Part of a heterodimeric geranyl(geranyl)diphosphate synthase. Interacts with GGR. The cofactor is Mg(2+). As to expression, expressed ubiquitously.

Its subcellular location is the plastid. The protein resides in the chloroplast. It is found in the cytoplasm. The enzyme catalyses isopentenyl diphosphate + dimethylallyl diphosphate = (2E)-geranyl diphosphate + diphosphate. The catalysed reaction is isopentenyl diphosphate + (2E)-geranyl diphosphate = (2E,6E)-farnesyl diphosphate + diphosphate. It catalyses the reaction isopentenyl diphosphate + (2E,6E)-farnesyl diphosphate = (2E,6E,10E)-geranylgeranyl diphosphate + diphosphate. It participates in isoprenoid biosynthesis; farnesyl diphosphate biosynthesis; farnesyl diphosphate from geranyl diphosphate and isopentenyl diphosphate: step 1/1. The protein operates within isoprenoid biosynthesis; geranyl diphosphate biosynthesis; geranyl diphosphate from dimethylallyl diphosphate and isopentenyl diphosphate: step 1/1. Its pathway is isoprenoid biosynthesis; geranylgeranyl diphosphate biosynthesis; geranylgeranyl diphosphate from farnesyl diphosphate and isopentenyl diphosphate: step 1/1. Heterodimeric geranyl(geranyl)-diphosphate (GPP) synthase large subunit. In vitro, the large subunit catalyzes mainly the trans-addition of the three molecules of IPP onto DMAPP to form geranylgeranyl pyrophosphate while the small subunit alone is inactive. Upon association of the two subunits, the product profile changes and the production of gerany-diphosphate is strongly increased. This chain is Heterodimeric geranylgeranyl pyrophosphate synthase large subunit 1, chloroplastic (GGPPS1), found in Arabidopsis thaliana (Mouse-ear cress).